A 300-amino-acid polypeptide reads, in one-letter code: N-acetylmuramic acid 6-phosphate etherase (300 aa).

One can recognise an SIS domain in the interval 57-220; sequence VAAALRAGGR…STGAMIRIGK (164 aa). Catalysis depends on glutamate 85, which acts as the Proton donor. Glutamate 116 is an active-site residue.

It belongs to the GCKR-like family. MurNAc-6-P etherase subfamily. As to quaternary structure, homodimer.

It carries out the reaction N-acetyl-D-muramate 6-phosphate + H2O = N-acetyl-D-glucosamine 6-phosphate + (R)-lactate. The protein operates within amino-sugar metabolism; 1,6-anhydro-N-acetylmuramate degradation. Its pathway is amino-sugar metabolism; N-acetylmuramate degradation. It functions in the pathway cell wall biogenesis; peptidoglycan recycling. In terms of biological role, specifically catalyzes the cleavage of the D-lactyl ether substituent of MurNAc 6-phosphate, producing GlcNAc 6-phosphate and D-lactate. Together with AnmK, is also required for the utilization of anhydro-N-acetylmuramic acid (anhMurNAc) either imported from the medium or derived from its own cell wall murein, and thus plays a role in cell wall recycling. This is N-acetylmuramic acid 6-phosphate etherase from Klebsiella aerogenes (Enterobacter aerogenes).